Consider the following 600-residue polypeptide: Cytidine monophosphate-N-acetylneuraminic acid hydroxylase (600 aa).

The Rieske domain occupies 9-107; sequence LSPVEVASLK…VEMDENNRLL (99 aa). [2Fe-2S] cluster-binding residues include Cys-49, His-51, Cys-70, and His-73.

The protein belongs to the CMP-Neu5Ac hydroxylase family. Requires [2Fe-2S] cluster as cofactor.

The protein resides in the cytoplasm. It carries out the reaction CMP-N-acetyl-beta-neuraminate + 2 Fe(II)-[cytochrome b5] + O2 + 2 H(+) = CMP-N-glycoloyl-beta-neuraminate + 2 Fe(III)-[cytochrome b5] + H2O. It functions in the pathway amino-sugar metabolism; N-acetylneuraminate metabolism. Its function is as follows. Sialic acids are components of carbohydrate chains of glycoconjugates and are involved in cell-cell recognition and cell-pathogen interactions. Catalyzes the conversion of CMP-N-acetylneuraminic acid (CMP-Neu5Ac) into its hydroxylated derivative CMP-N-glycolylneuraminic acid (CMP-Neu5Gc), a sialic acid abundantly expressed at the surface of many cells. This Pan paniscus (Pygmy chimpanzee) protein is Cytidine monophosphate-N-acetylneuraminic acid hydroxylase (CMAH).